The primary structure comprises 900 residues: Exosome complex component 10 homolog (900 aa).

Disordered regions lie at residues 1 to 31 and 147 to 174; these read MPRTPKRVHQEAKEESAQADQPPKKSASEDV and TSIEPAVASPQTQGTPKAGSWNRTTGTP. The segment covering 8 to 28 has biased composition (basic and acidic residues); sequence VHQEAKEESAQADQPPKKSAS. Residues 273–438 enclose the 3'-5' exonuclease domain; that stretch reads VVDTVEKLKQ…YVYGRMTNDL (166 aa). Mg(2+)-binding residues include aspartate 296, glutamate 298, aspartate 354, and aspartate 423. An HRDC domain is found at 485–565; that stretch reads DNRQLYALRG…LKARDQPLVK (81 aa). The segment at 731-900 is disordered; that stretch reads EQLKRKHPQA…FSNVRKEGKK (170 aa). Over residues 809 to 826 the composition is skewed to basic residues; that stretch reads RKQKKNQFQRGFKAKNRG. Residues 878–887 are compositionally biased toward low complexity; the sequence is NNRNNKQFNK.

It belongs to the exosome component 10/RRP6 family. Component of the RNA exosome complex. Interacts with spn-A/Rad51; the interaction is required for the recruitment of spn-A to the DNA-damage response foci. Interacts with Su(var)3-9, a heterochromatin factor; the interaction promotes association of Rrp6 with a subset of genomic loci. Interacts with Su(var)205, a heterochromatin factor. Interacts with HDAC1, a heterochromatin factor. The cofactor is Mg(2+). Salivary gland (at protein level).

Its subcellular location is the nucleus. The protein localises to the chromosome. The protein resides in the cytoplasm. It localises to the cell cortex. It is found in the cytoskeleton. Its subcellular location is the microtubule organizing center. The protein localises to the centrosome. The protein resides in the spindle. It localises to the midbody. Its function is as follows. Catalytic component of the RNA exosome complex which has 3'-&gt;5' exoribonuclease activity and participates in a multitude of cellular RNA processing and degradation events. Degrades a large variety of non-coding RNAs that are processed by the exosome, such as pre-rRNAs and some small nucleolar RNAs (snoRNAs). Degrades transcripts derived from different types of heterochromatic repeats, such as subtelomeric minisatellites and simple gagaa repeats. Degrades transcripts derived from transposons and transposon fragments. Degrades chromatin-associated transcripts and contributes to the compaction of heterochromatin. Required for the efficient repair of DNA double-strand breaks via homologous recombination after irradiation. Required for cell proliferation and error-free mitosis. This is Exosome complex component 10 homolog from Drosophila melanogaster (Fruit fly).